Here is a 250-residue protein sequence, read N- to C-terminus: UPF0014 membrane protein YjkA (250 aa).

The next 6 helical transmembrane spans lie at 3-23 (YLSL…SKSF), 32-52 (IIAT…LSLI), 57-77 (HPVF…QNVI), 91-111 (FAAL…LHII), 117-137 (YVIP…SLFL), and 214-234 (LLIV…LSVL).

It belongs to the UPF0014 family.

It localises to the cell membrane. The polypeptide is UPF0014 membrane protein YjkA (yjkA) (Bacillus subtilis (strain 168)).